Reading from the N-terminus, the 212-residue chain is Imidazole glycerol phosphate synthase subunit HisH (212 aa).

One can recognise a Glutamine amidotransferase type-1 domain in the interval 3–212 (SIAVVDYGMG…LLSNFLKWTP (210 aa)). Cys82 (nucleophile) is an active-site residue. Active-site residues include His192 and Glu194.

Heterodimer of HisH and HisF.

The protein resides in the cytoplasm. The enzyme catalyses 5-[(5-phospho-1-deoxy-D-ribulos-1-ylimino)methylamino]-1-(5-phospho-beta-D-ribosyl)imidazole-4-carboxamide + L-glutamine = D-erythro-1-(imidazol-4-yl)glycerol 3-phosphate + 5-amino-1-(5-phospho-beta-D-ribosyl)imidazole-4-carboxamide + L-glutamate + H(+). The catalysed reaction is L-glutamine + H2O = L-glutamate + NH4(+). It functions in the pathway amino-acid biosynthesis; L-histidine biosynthesis; L-histidine from 5-phospho-alpha-D-ribose 1-diphosphate: step 5/9. Its function is as follows. IGPS catalyzes the conversion of PRFAR and glutamine to IGP, AICAR and glutamate. The HisH subunit catalyzes the hydrolysis of glutamine to glutamate and ammonia as part of the synthesis of IGP and AICAR. The resulting ammonia molecule is channeled to the active site of HisF. The polypeptide is Imidazole glycerol phosphate synthase subunit HisH (Nitrosomonas europaea (strain ATCC 19718 / CIP 103999 / KCTC 2705 / NBRC 14298)).